A 359-amino-acid chain; its full sequence is Peptide chain release factor 1 (359 aa).

Glutamine 236 is subject to N5-methylglutamine. Residues 288 to 307 (QDEQDAERKSTIGTGDRSER) form a disordered region. The span at 293-307 (AERKSTIGTGDRSER) shows a compositional bias: basic and acidic residues.

The protein belongs to the prokaryotic/mitochondrial release factor family. Methylated by PrmC. Methylation increases the termination efficiency of RF1.

Its subcellular location is the cytoplasm. Functionally, peptide chain release factor 1 directs the termination of translation in response to the peptide chain termination codons UAG and UAA. The protein is Peptide chain release factor 1 (prfA) of Streptococcus gordonii (strain Challis / ATCC 35105 / BCRC 15272 / CH1 / DL1 / V288).